We begin with the raw amino-acid sequence, 491 residues long: 3-octaprenyl-4-hydroxybenzoate carboxy-lyase (491 aa).

A Mn(2+)-binding site is contributed by Asn172. Residues 175-177 (IYR), 189-191 (RWL), and 194-195 (RG) each bind prenylated FMN. Glu238 contributes to the Mn(2+) binding site. Asp287 acts as the Proton donor in catalysis.

This sequence belongs to the UbiD family. As to quaternary structure, homohexamer. The cofactor is prenylated FMN. It depends on Mn(2+) as a cofactor.

It localises to the cell membrane. The enzyme catalyses a 4-hydroxy-3-(all-trans-polyprenyl)benzoate + H(+) = a 2-(all-trans-polyprenyl)phenol + CO2. Its pathway is cofactor biosynthesis; ubiquinone biosynthesis. Its function is as follows. Catalyzes the decarboxylation of 3-octaprenyl-4-hydroxy benzoate to 2-octaprenylphenol, an intermediate step in ubiquinone biosynthesis. The polypeptide is 3-octaprenyl-4-hydroxybenzoate carboxy-lyase (Histophilus somni (strain 129Pt) (Haemophilus somnus)).